Here is a 162-residue protein sequence, read N- to C-terminus: Endoribonuclease YbeY (162 aa).

Positions 117, 121, and 127 each coordinate Zn(2+).

The protein belongs to the endoribonuclease YbeY family. The cofactor is Zn(2+).

The protein resides in the cytoplasm. Its function is as follows. Single strand-specific metallo-endoribonuclease involved in late-stage 70S ribosome quality control and in maturation of the 3' terminus of the 16S rRNA. The sequence is that of Endoribonuclease YbeY from Francisella tularensis subsp. holarctica (strain OSU18).